A 315-amino-acid polypeptide reads, in one-letter code: uncharacterized protein (315 aa).

The span at 296 to 308 (RSKLRKGTHKRTP) shows a compositional bias: basic residues. The interval 296-315 (RSKLRKGTHKRTPGRAGDAD) is disordered.

It belongs to the metallo-dependent hydrolases superfamily. Peptidase M19 family.

This is an uncharacterized protein from Acinetobacter calcoaceticus.